We begin with the raw amino-acid sequence, 229 residues long: MAKKSKNLRAALEKIDSTKAYSVEEAVALAKETNFAKFDATVEVSYNLNIDVKKADQQIRGAMVLPAGTGKTSRVLVFARGAKAEEAKAAGADFVGEDDLVAKIQGGWLDFDVVIATPDMMALVGRLGRVLGPRNLMPNPKTGTVTMDVAKAVEESKGGKITYRADKAGNVQALIGKVSFDDAKLVDNFKAFNDVIVKAKPATAKGTYITNLSITTTQGVGIKVDPNSL.

This sequence belongs to the universal ribosomal protein uL1 family. As to quaternary structure, part of the 50S ribosomal subunit.

In terms of biological role, binds directly to 23S rRNA. The L1 stalk is quite mobile in the ribosome, and is involved in E site tRNA release. Its function is as follows. Protein L1 is also a translational repressor protein, it controls the translation of the L11 operon by binding to its mRNA. This chain is Large ribosomal subunit protein uL1, found in Streptococcus agalactiae serotype Ia (strain ATCC 27591 / A909 / CDC SS700).